A 578-amino-acid chain; its full sequence is Phosphoenolpyruvate-protein phosphotransferase (578 aa).

His-195 acts as the Tele-phosphohistidine intermediate in catalysis. Arg-302 and Arg-338 together coordinate phosphoenolpyruvate. Mg(2+) contacts are provided by Glu-437 and Asp-461. Phosphoenolpyruvate is bound by residues 460-461 and Arg-471; that span reads ND. Cys-508 acts as the Proton donor in catalysis.

It belongs to the PEP-utilizing enzyme family. Homodimer. The cofactor is Mg(2+).

Its subcellular location is the cytoplasm. The enzyme catalyses L-histidyl-[protein] + phosphoenolpyruvate = N(pros)-phospho-L-histidyl-[protein] + pyruvate. Functionally, general (non sugar-specific) component of the phosphoenolpyruvate-dependent sugar phosphotransferase system (sugar PTS). This major carbohydrate active-transport system catalyzes the phosphorylation of incoming sugar substrates concomitantly with their translocation across the cell membrane. Enzyme I transfers the phosphoryl group from phosphoenolpyruvate (PEP) to the phosphoryl carrier protein (HPr). This is Phosphoenolpyruvate-protein phosphotransferase (ptsI) from Geobacillus stearothermophilus (Bacillus stearothermophilus).